We begin with the raw amino-acid sequence, 883 residues long: AP-5 complex subunit beta-1 (883 aa).

In terms of assembly, probably part of the adaptor protein complex 5 (AP-5).

Its function is as follows. As part of AP-5, a probable fifth adaptor protein complex, it may be involved in endosomal transport. This Xenopus tropicalis (Western clawed frog) protein is AP-5 complex subunit beta-1 (ap5b1).